Reading from the N-terminus, the 439-residue chain is Beta-1,3-galactosyl-O-glycosyl-glycoprotein beta-1,6-N-acetylglucosaminyltransferase (439 aa).

Topologically, residues 1-11 are cytoplasmic; the sequence is MVGWKKKKLCR. A helical; Signal-anchor for type II membrane protein membrane pass occupies residues 12–29; that stretch reads GHHLWVLGCYMLLAVVSL. At 30-439 the chain is on the lumenal side; it reads RLSLRFKCDV…RHKAIYGTEL (410 aa). N-linked (GlcNAc...) asparagine; by host glycosylation is found at N71 and N107. 4 cysteine pairs are disulfide-bonded: C72-C229, C163-C383, C184-C211, and C392-C424.

It belongs to the glycosyltransferase 14 family.

The protein localises to the host Golgi apparatus membrane. It carries out the reaction a 3-O-[beta-D-galactosyl-(1-&gt;3)-N-acetyl-alpha-D-galactosaminyl]-L-seryl-[protein] + UDP-N-acetyl-alpha-D-glucosamine = 3-O-{beta-D-galactosyl-(1-&gt;3)-[N-acetyl-beta-D-glucosaminyl-(1-&gt;6)]-N-acetyl-alpha-D-galactosaminyl}-L-seryl-[protein] + UDP + H(+). It catalyses the reaction a 3-O-[beta-D-galactosyl-(1-&gt;3)-N-acetyl-alpha-D-galactosaminyl]-L-threonyl-[protein] + UDP-N-acetyl-alpha-D-glucosamine = a 3-O-{beta-D-galactosyl-(1-&gt;3)-[N-acetyl-beta-D-glucosaminyl-(1-&gt;6)]-N-acetyl-alpha-D-galactosaminyl}-L-threonyl-[protein] + UDP + H(+). The catalysed reaction is a beta-D-Gal-(1-&gt;4)-beta-D-GlcNAc-(1-&gt;3)-beta-D-Gal-(1-&gt;4)-beta-D-GlcNAc derivative + UDP-N-acetyl-alpha-D-glucosamine = a beta-D-Gal-(1-&gt;4)-beta-D-GlcNAc-(1-&gt;3)-[beta-D-GlcNAc-(1-&gt;6)]-beta-D-Gal-(1-&gt;4)-N-acetyl-beta-D-glucosaminyl derivative + UDP + H(+). The enzyme catalyses 3-O-[N-acetyl-beta-D-glucosaminyl-(1-&gt;3)-N-acetyl-alpha-D-galactosaminyl]-L-seryl-[protein] + UDP-N-acetyl-alpha-D-glucosamine = 3-O-[N-acetyl-beta-D-glucosaminyl-(1-&gt;3)-[N-acetyl-beta-D-glucosaminyl-(1-&gt;6)]-N-acetyl-alpha-D-galactosaminyl]-L-seryl-[protein] + UDP + H(+). It carries out the reaction a 3-O-[N-acetyl-beta-D-glucosaminyl-(1-&gt;3)-N-acetyl-alpha-D-galactosaminyl]-L-threonyl-[protein] + UDP-N-acetyl-alpha-D-glucosamine = 3-O-[N-acetyl-beta-D-glucosaminyl-(1-&gt;3)-[N-acetyl-beta-D-glucosaminyl-(1-&gt;6)]-N-acetyl-alpha-D-galactosaminyl]-L-threonyl-[protein] + UDP + H(+). It participates in protein modification; protein glycosylation. Its function is as follows. Non-essential glycosyltransferase that can synthesize all known mucin beta 6 N-acetylglucosaminides. Mediates core 2 and core 4 O-glycan branching, 2 important steps in mucin-type biosynthesis. Has also I-branching enzyme activity by converting linear into branched poly-N-acetyllactosaminoglycans. Contributes to the post-translational modifications of structural proteins. The chain is Beta-1,3-galactosyl-O-glycosyl-glycoprotein beta-1,6-N-acetylglucosaminyltransferase (Bo17) from Bovine herpesvirus 4 (BoHV-4).